Consider the following 201-residue polypeptide: MAQPEDPEDFVAPAAYRVRAGTMLLANTDLLEPTFRRSVIYVVEHNDGGTLGVVLNRPSETAVYNVLPQWAKLATKPKTMFIGGPVKRDAALCLATLRVGIDPAGVDGLRHVQGRVVMVDLDADPDSIAPMVEGVRIFAGYSGWTIGQLEGEIERDDWIVLSALPSDVLVEPRVDLWARILRRQPMPLSLLATHPIDLSRN.

Belongs to the UPF0301 (AlgH) family.

This Mycolicibacterium vanbaalenii (strain DSM 7251 / JCM 13017 / BCRC 16820 / KCTC 9966 / NRRL B-24157 / PYR-1) (Mycobacterium vanbaalenii) protein is UPF0301 protein Mvan_6057.